Reading from the N-terminus, the 311-residue chain is DNA-directed RNA polymerase subunit alpha (311 aa).

The tract at residues 1-227 is alpha N-terminal domain (alpha-NTD); the sequence is MNNISIKCLK…DLFTLLINNK (227 aa). The segment at 242-311 is alpha C-terminal domain (alpha-CTD); sequence ISIEPYTNIA…LKNKLGIILK (70 aa).

This sequence belongs to the RNA polymerase alpha chain family. As to quaternary structure, in plastids the minimal PEP RNA polymerase catalytic core is composed of four subunits: alpha, beta, beta', and beta''. When a (nuclear-encoded) sigma factor is associated with the core the holoenzyme is formed, which can initiate transcription.

The protein localises to the plastid. It localises to the chloroplast. It carries out the reaction RNA(n) + a ribonucleoside 5'-triphosphate = RNA(n+1) + diphosphate. DNA-dependent RNA polymerase catalyzes the transcription of DNA into RNA using the four ribonucleoside triphosphates as substrates. This Phaeodactylum tricornutum (strain CCAP 1055/1) protein is DNA-directed RNA polymerase subunit alpha.